Here is a 269-residue protein sequence, read N- to C-terminus: Tryptophan synthase alpha chain (269 aa).

Catalysis depends on proton acceptor residues Glu49 and Asp60.

This sequence belongs to the TrpA family. In terms of assembly, tetramer of two alpha and two beta chains.

It catalyses the reaction (1S,2R)-1-C-(indol-3-yl)glycerol 3-phosphate + L-serine = D-glyceraldehyde 3-phosphate + L-tryptophan + H2O. It functions in the pathway amino-acid biosynthesis; L-tryptophan biosynthesis; L-tryptophan from chorismate: step 5/5. Its function is as follows. The alpha subunit is responsible for the aldol cleavage of indoleglycerol phosphate to indole and glyceraldehyde 3-phosphate. The protein is Tryptophan synthase alpha chain of Salmonella arizonae (strain ATCC BAA-731 / CDC346-86 / RSK2980).